Reading from the N-terminus, the 319-residue chain is Quinolinate synthase (319 aa).

Iminosuccinate-binding residues include His35 and Ser52. Cys97 contacts [4Fe-4S] cluster. Iminosuccinate is bound by residues 123-125 (YIN) and Ser140. Cys183 provides a ligand contact to [4Fe-4S] cluster. Iminosuccinate-binding positions include 209-211 (HPE) and Thr226. Cys276 contacts [4Fe-4S] cluster.

This sequence belongs to the quinolinate synthase family. Type 2 subfamily. Requires [4Fe-4S] cluster as cofactor.

The protein resides in the cytoplasm. It catalyses the reaction iminosuccinate + dihydroxyacetone phosphate = quinolinate + phosphate + 2 H2O + H(+). It participates in cofactor biosynthesis; NAD(+) biosynthesis; quinolinate from iminoaspartate: step 1/1. In terms of biological role, catalyzes the condensation of iminoaspartate with dihydroxyacetone phosphate to form quinolinate. This chain is Quinolinate synthase, found in Microcystis aeruginosa (strain NIES-843 / IAM M-2473).